Consider the following 271-residue polypeptide: HTH-type transcriptional repressor AllR (271 aa).

Positions 21-83 constitute an HTH iclR-type domain; sequence AQALERGIAI…SQLGWWHIGL (63 aa). Positions 43-62 form a DNA-binding region, H-T-H motif; sequence VSDISLNLDLPLSTTFRLLK. The IclR-ED domain maps to 98–267; it reads VLSVAGPFMR…ARDISTALGL (170 aa). Glyoxylate is bound by residues 154–156, Asp207, Cys217, and 234–236; these read SGA and SIS.

Its function is as follows. Negative regulator of allantoin and glyoxylate utilization operons. Binds to the gcl promoter and to the allS-allA intergenic region. This is HTH-type transcriptional repressor AllR (allR) from Escherichia coli (strain UTI89 / UPEC).